The chain runs to 238 residues: tRNA (guanine-N(7)-)-methyltransferase (238 aa).

S-adenosyl-L-methionine contacts are provided by Glu-68, Glu-93, Asp-120, and Asp-143. The active site involves Asp-143. Residues Lys-147, Asp-179, and 216 to 219 (TKFE) each bind substrate.

This sequence belongs to the class I-like SAM-binding methyltransferase superfamily. TrmB family.

The enzyme catalyses guanosine(46) in tRNA + S-adenosyl-L-methionine = N(7)-methylguanosine(46) in tRNA + S-adenosyl-L-homocysteine. It functions in the pathway tRNA modification; N(7)-methylguanine-tRNA biosynthesis. In terms of biological role, catalyzes the formation of N(7)-methylguanine at position 46 (m7G46) in tRNA. This Shewanella baltica (strain OS155 / ATCC BAA-1091) protein is tRNA (guanine-N(7)-)-methyltransferase.